We begin with the raw amino-acid sequence, 409 residues long: TNF receptor-associated factor family protein DDB_G0273435/DDB_G0273505 (409 aa).

The RING-type; degenerate zinc-finger motif lies at C20–C59. TRAF-type zinc fingers lie at residues K75 to N145 and N145 to S201. Residues H221 to D250 are a coiled coil. Residues S252 to I380 enclose the MATH domain.

Belongs to the TNF receptor-associated factor family. A subfamily.

It is found in the cytoplasm. Probable adapter protein and signal transducer that links members of the tumor necrosis factor receptor family to different signaling pathways by association with the receptor cytoplasmic domain and kinases. The sequence is that of TNF receptor-associated factor family protein DDB_G0273435/DDB_G0273505 from Dictyostelium discoideum (Social amoeba).